We begin with the raw amino-acid sequence, 313 residues long: Ester hydrolase C11orf54 homolog (313 aa).

Zn(2+) contacts are provided by H264, H266, and H276.

Monomer. The cofactor is Zn(2+).

It localises to the nucleus. Its subcellular location is the cytoplasm. Functionally, exhibits ester hydrolase activity on the substrate p-nitrophenyl acetate, in vitro. May regulate DNA damage and repair by regulating HIF1A degradation via chaperone-mediated autophagy (CMA). The protein is Ester hydrolase C11orf54 homolog of Xenopus tropicalis (Western clawed frog).